The following is a 274-amino-acid chain: Glutamate racemase (274 aa).

Residues 9–10 and 41–42 contribute to the substrate site; these read DS and YG. Catalysis depends on Cys-73, which acts as the Proton donor/acceptor. 74–75 provides a ligand contact to substrate; the sequence is NT. Catalysis depends on Cys-183, which acts as the Proton donor/acceptor. A substrate-binding site is contributed by 184–185; it reads TH.

Belongs to the aspartate/glutamate racemases family.

It carries out the reaction L-glutamate = D-glutamate. The protein operates within cell wall biogenesis; peptidoglycan biosynthesis. Provides the (R)-glutamate required for cell wall biosynthesis. This is Glutamate racemase from Shewanella baltica (strain OS223).